Reading from the N-terminus, the 518-residue chain is Major facilitator superfamily multidrug transporter mfsC (518 aa).

7 consecutive transmembrane segments (helical) span residues 27–47 (VLLT…SVLF), 65–85 (WVLI…GQLG), 88–108 (FGLE…NVIN), 123–143 (ISGV…SNTF), 152–172 (ALAI…VVGS), 183–203 (IFWL…LFLP), and 212–232 (PIDI…VYGL). N-linked (GlcNAc...) asparagine glycosylation is present at N233. 7 helical membrane passes run 242–262 (SAAM…FLWV), 281–301 (FLVM…WFFI), 315–335 (ILTA…GVFA), 347–367 (ILVA…FAGP), 380–400 (TAII…SILL), 409–429 (AVAG…ILAG), and 455–475 (AFWL…VCYW).

Belongs to the major facilitator superfamily. EmrB family.

The protein resides in the membrane. Major facilitator superfamily transporter that may be involved in A.fumigatus adaptation to azoles such as vorizonazole. The chain is Major facilitator superfamily multidrug transporter mfsC from Aspergillus fumigatus (strain ATCC MYA-4609 / CBS 101355 / FGSC A1100 / Af293) (Neosartorya fumigata).